The chain runs to 116 residues: Proline-rich protein 9 (116 aa).

This is Proline-rich protein 9 (Prr9) from Mus musculus (Mouse).